The chain runs to 73 residues: Large ribosomal subunit protein bL31 (73 aa).

Zn(2+)-binding residues include Cys16, Cys18, Cys37, and Cys40.

This sequence belongs to the bacterial ribosomal protein bL31 family. Type A subfamily. In terms of assembly, part of the 50S ribosomal subunit. It depends on Zn(2+) as a cofactor.

Functionally, binds the 23S rRNA. This Pseudomonas syringae pv. syringae (strain B728a) protein is Large ribosomal subunit protein bL31.